A 312-amino-acid chain; its full sequence is Dihydroorotate dehydrogenase B (NAD(+)), catalytic subunit (312 aa).

Residues Ser23 and 47–48 (KA) each bind FMN. Substrate-binding positions include Lys47 and 71–75 (NAIGL). Positions 103 and 131 each coordinate FMN. Asn131 provides a ligand contact to substrate. The active-site Nucleophile is Cys134. Residues Lys171 and Ile197 each contribute to the FMN site. A substrate-binding site is contributed by 198 to 199 (NT). Residues Gly223, 249 to 250 (GG), and 271 to 272 (GT) contribute to the FMN site.

It belongs to the dihydroorotate dehydrogenase family. Type 1 subfamily. Heterotetramer of 2 PyrK and 2 PyrD type B subunits. FMN serves as cofactor.

The protein localises to the cytoplasm. The enzyme catalyses (S)-dihydroorotate + NAD(+) = orotate + NADH + H(+). It functions in the pathway pyrimidine metabolism; UMP biosynthesis via de novo pathway; orotate from (S)-dihydroorotate (NAD(+) route): step 1/1. Functionally, catalyzes the conversion of dihydroorotate to orotate with NAD(+) as electron acceptor. This Streptococcus pneumoniae (strain ATCC BAA-255 / R6) protein is Dihydroorotate dehydrogenase B (NAD(+)), catalytic subunit (pyrDB).